The following is an 897-amino-acid chain: Translation initiation factor IF-2 (897 aa).

A tr-type G domain is found at 402–570; the sequence is NRAPIVTIMG…SILVQSEILE (169 aa). Residues 411–418 are G1; sequence GHVDHGKT. 411–418 provides a ligand contact to GTP; sequence GHVDHGKT. Residues 436 to 440 are G2; it reads GITQN. The segment at 458-461 is G3; sequence DTPG. GTP-binding positions include 458-462 and 512-515; these read DTPGH and NKID. Positions 512 to 515 are G4; it reads NKID. The segment at 548–550 is G5; that stretch reads SAV.

Belongs to the TRAFAC class translation factor GTPase superfamily. Classic translation factor GTPase family. IF-2 subfamily.

Its subcellular location is the cytoplasm. In terms of biological role, one of the essential components for the initiation of protein synthesis. Protects formylmethionyl-tRNA from spontaneous hydrolysis and promotes its binding to the 30S ribosomal subunits. Also involved in the hydrolysis of GTP during the formation of the 70S ribosomal complex. This chain is Translation initiation factor IF-2, found in Blochmanniella floridana.